A 321-amino-acid polypeptide reads, in one-letter code: MGTALHETNSSEVHVSEFILLGFPGIHEFQIWLSLPMALLYIVALGANLLILITIYLEPTLHQPMYQFLGILAAVDIGLATTSMPKILAILWFDAKTISLPECFAQIYAIHTFMCMESGVFLCMAIDRYVAICYPLQYPSIVTEAFVIKATLSMLLRNGLLTIPVPVLAAQRQYCSRNEIDHCLCSNLGVISLACDDITVNRFYQLALAWLVVGSDMILVYASYALIIRSVLRLNSTEAASKALSTCSSHLILIMFYYTAIVIVSVTHLAGRRVPLIPVLLNVMHIVIPPSLNPVVYALRTQELKVGFRKVFSLSEFVSRK.

Over 1–36 the chain is Extracellular; that stretch reads MGTALHETNSSEVHVSEFILLGFPGIHEFQIWLSLP. The chain crosses the membrane as a helical span at residues 37-57; that stretch reads MALLYIVALGANLLILITIYL. The Cytoplasmic portion of the chain corresponds to 58-70; sequence EPTLHQPMYQFLG. The chain crosses the membrane as a helical span at residues 71 to 91; it reads ILAAVDIGLATTSMPKILAIL. At 92 to 105 the chain is on the extracellular side; the sequence is WFDAKTISLPECFA. C103 and C185 are oxidised to a cystine. Residues 106–126 form a helical membrane-spanning segment; that stretch reads QIYAIHTFMCMESGVFLCMAI. Topologically, residues 127-128 are cytoplasmic; that stretch reads DR. A helical membrane pass occupies residues 129–149; that stretch reads YVAICYPLQYPSIVTEAFVIK. Residues 150 to 207 are Extracellular-facing; that stretch reads ATLSMLLRNGLLTIPVPVLAAQRQYCSRNEIDHCLCSNLGVISLACDDITVNRFYQLA. The chain crosses the membrane as a helical span at residues 208-228; it reads LAWLVVGSDMILVYASYALII. At 229–250 the chain is on the cytoplasmic side; the sequence is RSVLRLNSTEAASKALSTCSSH. The helical transmembrane segment at 251-271 threads the bilayer; the sequence is LILIMFYYTAIVIVSVTHLAG. Residues 272 to 275 are Extracellular-facing; that stretch reads RRVP. A helical membrane pass occupies residues 276 to 296; that stretch reads LIPVLLNVMHIVIPPSLNPVV. Residues 297 to 321 lie on the Cytoplasmic side of the membrane; sequence YALRTQELKVGFRKVFSLSEFVSRK.

The protein belongs to the G-protein coupled receptor 1 family.

The protein resides in the cell membrane. Functionally, odorant receptor. The polypeptide is Olfactory receptor 56B34 (Mus musculus (Mouse)).